Consider the following 332-residue polypeptide: UDP-3-O-acylglucosamine N-acyltransferase (332 aa).

The active-site Proton acceptor is the His-231.

Belongs to the transferase hexapeptide repeat family. LpxD subfamily. As to quaternary structure, homotrimer.

The catalysed reaction is a UDP-3-O-[(3R)-3-hydroxyacyl]-alpha-D-glucosamine + a (3R)-hydroxyacyl-[ACP] = a UDP-2-N,3-O-bis[(3R)-3-hydroxyacyl]-alpha-D-glucosamine + holo-[ACP] + H(+). Its pathway is bacterial outer membrane biogenesis; LPS lipid A biosynthesis. Catalyzes the N-acylation of UDP-3-O-acylglucosamine using 3-hydroxyacyl-ACP as the acyl donor. Is involved in the biosynthesis of lipid A, a phosphorylated glycolipid that anchors the lipopolysaccharide to the outer membrane of the cell. This Vesicomyosocius okutanii subsp. Calyptogena okutanii (strain HA) protein is UDP-3-O-acylglucosamine N-acyltransferase.